Consider the following 162-residue polypeptide: Small ribosomal subunit protein uS7m (162 aa).

The protein belongs to the universal ribosomal protein uS7 family. As to quaternary structure, part of the small ribosomal subunit.

The protein localises to the mitochondrion. Functionally, one of the primary rRNA binding proteins, it binds directly to 16S-like rRNA where it nucleates assembly of the head domain of the small subunit. The polypeptide is Small ribosomal subunit protein uS7m (mrps7) (Dictyostelium citrinum (Slime mold)).